A 187-amino-acid polypeptide reads, in one-letter code: Large ribosomal subunit protein uL5 (187 aa).

The protein belongs to the universal ribosomal protein uL5 family. Part of the 50S ribosomal subunit; part of the 5S rRNA/L5/L18/L25 subcomplex. Contacts the 5S rRNA and the P site tRNA. Forms a bridge to the 30S subunit in the 70S ribosome.

This is one of the proteins that bind and probably mediate the attachment of the 5S RNA into the large ribosomal subunit, where it forms part of the central protuberance. In the 70S ribosome it contacts protein S13 of the 30S subunit (bridge B1b), connecting the 2 subunits; this bridge is implicated in subunit movement. Contacts the P site tRNA; the 5S rRNA and some of its associated proteins might help stabilize positioning of ribosome-bound tRNAs. This Gluconobacter oxydans (strain 621H) (Gluconobacter suboxydans) protein is Large ribosomal subunit protein uL5.